A 1098-amino-acid chain; its full sequence is Eukaryotic translation initiation factor 3 subunit A (1098 aa).

The 180-residue stretch at 324-503 (AQEQATRVLL…DCVRFGSSDA (180 aa)) folds into the PCI domain. A coiled-coil region spans residues 574 to 844 (TEIERIHRRK…ARQAVIDSQR (271 aa)). Disordered regions lie at residues 599-648 (EKAA…KIKR) and 805-1098 (RAEK…NWRR). 3 stretches are compositionally biased toward basic and acidic residues: residues 608-648 (QAKR…KIKR), 805-857 (RAEK…REME), and 877-895 (MPQREPRPMRDGPPREPFR). The span at 905–914 (DSSWRSSAQP) shows a compositional bias: polar residues. Basic and acidic residues-rich tracts occupy residues 916-978 (RKPD…ERGA) and 1054-1079 (LPPRDLPPRDGPRDIPRRDGPRRDGP). The span at 1080–1098 (NRNSGANNAGNADSANWRR) shows a compositional bias: low complexity.

This sequence belongs to the eIF-3 subunit A family. Component of the eukaryotic translation initiation factor 3 (eIF-3) complex.

Its subcellular location is the cytoplasm. Functionally, RNA-binding component of the eukaryotic translation initiation factor 3 (eIF-3) complex, which is involved in protein synthesis of a specialized repertoire of mRNAs and, together with other initiation factors, stimulates binding of mRNA and methionyl-tRNAi to the 40S ribosome. The eIF-3 complex specifically targets and initiates translation of a subset of mRNAs involved in cell proliferation. In Caenorhabditis briggsae, this protein is Eukaryotic translation initiation factor 3 subunit A.